A 463-amino-acid polypeptide reads, in one-letter code: Glutamyl-tRNA reductase (463 aa).

Substrate contacts are provided by residues 49-52 (TCNR), S109, 114-116 (EQQ), and Q120. Residue C50 is the Nucleophile of the active site. Position 196-201 (196-201 (GAGAMS)) interacts with NADP(+).

Belongs to the glutamyl-tRNA reductase family. As to quaternary structure, homodimer.

It catalyses the reaction (S)-4-amino-5-oxopentanoate + tRNA(Glu) + NADP(+) = L-glutamyl-tRNA(Glu) + NADPH + H(+). It participates in porphyrin-containing compound metabolism; protoporphyrin-IX biosynthesis; 5-aminolevulinate from L-glutamyl-tRNA(Glu): step 1/2. Its function is as follows. Catalyzes the NADPH-dependent reduction of glutamyl-tRNA(Glu) to glutamate 1-semialdehyde (GSA). The chain is Glutamyl-tRNA reductase from Corynebacterium glutamicum (strain R).